A 208-amino-acid chain; its full sequence is Outer-membrane lipoprotein carrier protein (208 aa).

An N-terminal signal peptide occupies residues 1-22 (MKKRLCAVLLASPLLFSAAVFA).

This sequence belongs to the LolA family. Monomer.

Its subcellular location is the periplasm. Its function is as follows. Participates in the translocation of lipoproteins from the inner membrane to the outer membrane. Only forms a complex with a lipoprotein if the residue after the N-terminal Cys is not an aspartate (The Asp acts as a targeting signal to indicate that the lipoprotein should stay in the inner membrane). The sequence is that of Outer-membrane lipoprotein carrier protein from Shewanella baltica (strain OS223).